Reading from the N-terminus, the 536-residue chain is MDTLFMTTVTATPAIKEDRILILDFGSQYSQLIARRVRDSGVFCEMFPYDIDTQRITDFGAKGIILSGGPESVHAENSPRINDAVFELGVPVLGICYGMQAMAERFGGKVHASDIHEFGAATINIDGKSTLTNGIEDAAAKLNVWMSHGDKVVDAPQGFDIVASTPSCPIAIMADDSRHYYGLQFHPEVTHTAQGQALLGRFVHEICDCAGSWTPDNIIDMRIEQLKKQIGDKQVLLGLSGGVDSSVVAALLHKAIGDQLTCVFVDTGLLRLHEGDQVMQIFAENMGVKVIRVDAEELFLTALAGESDPEAKRKIIGKTFIDVFANSAREISEQSDGKVIEFLAQGTIYPDVIESAKSHQGKAHVIKSHHNVGGLPDDLAFELVEPLRDLFKDEVRKLGITLGLPAKMINRHPFPGPGLGVRILGEVTKEFADILRSADAIFMEELEKSGWYEKTAQAFAVFQPIKSVGVVGDGRRYAWVIALRAVETVDFMTARFAHLPYDLIETVSNRIMNEIAEVSRVTYDVSSKPPATIEWE.

The region spanning 19–212 is the Glutamine amidotransferase type-1 domain; that stretch reads RILILDFGSQ…VHEICDCAGS (194 aa). Cysteine 96 acts as the Nucleophile in catalysis. Residues histidine 186 and glutamate 188 contribute to the active site. The 199-residue stretch at 213 to 411 folds into the GMPS ATP-PPase domain; that stretch reads WTPDNIIDMR…LGLPAKMINR (199 aa). An ATP-binding site is contributed by 240–246; the sequence is SGGVDSS.

In terms of assembly, homodimer.

It carries out the reaction XMP + L-glutamine + ATP + H2O = GMP + L-glutamate + AMP + diphosphate + 2 H(+). The protein operates within purine metabolism; GMP biosynthesis; GMP from XMP (L-Gln route): step 1/1. Catalyzes the synthesis of GMP from XMP. This is GMP synthase [glutamine-hydrolyzing] from Psychrobacter arcticus (strain DSM 17307 / VKM B-2377 / 273-4).